A 404-amino-acid polypeptide reads, in one-letter code: Acetylornithine aminotransferase (404 aa).

Pyridoxal 5'-phosphate-binding positions include glycine 113 to threonine 114 and phenylalanine 139. Position 142 (arginine 142) interacts with N(2)-acetyl-L-ornithine. Aspartate 224–glutamine 227 contributes to the pyridoxal 5'-phosphate binding site. Position 253 is an N6-(pyridoxal phosphate)lysine (lysine 253). Residue serine 281 participates in N(2)-acetyl-L-ornithine binding. A pyridoxal 5'-phosphate-binding site is contributed by threonine 282.

It belongs to the class-III pyridoxal-phosphate-dependent aminotransferase family. ArgD subfamily. In terms of assembly, homodimer. Pyridoxal 5'-phosphate is required as a cofactor.

It localises to the cytoplasm. It catalyses the reaction N(2)-acetyl-L-ornithine + 2-oxoglutarate = N-acetyl-L-glutamate 5-semialdehyde + L-glutamate. Its pathway is amino-acid biosynthesis; L-arginine biosynthesis; N(2)-acetyl-L-ornithine from L-glutamate: step 4/4. The protein is Acetylornithine aminotransferase of Mycobacterium leprae (strain TN).